Here is a 359-residue protein sequence, read N- to C-terminus: 3-dehydroquinate synthase (359 aa).

Residues 69 to 74 (DGEAHK), 103 to 107 (GVIGD), 127 to 128 (TT), Lys-140, Lys-149, and 167 to 170 (TLDT) each bind NAD(+). Zn(2+) is bound by residues Glu-182, His-245, and His-262.

It belongs to the sugar phosphate cyclases superfamily. Dehydroquinate synthase family. Co(2+) serves as cofactor. Zn(2+) is required as a cofactor. Requires NAD(+) as cofactor.

It is found in the cytoplasm. The enzyme catalyses 7-phospho-2-dehydro-3-deoxy-D-arabino-heptonate = 3-dehydroquinate + phosphate. It participates in metabolic intermediate biosynthesis; chorismate biosynthesis; chorismate from D-erythrose 4-phosphate and phosphoenolpyruvate: step 2/7. Functionally, catalyzes the conversion of 3-deoxy-D-arabino-heptulosonate 7-phosphate (DAHP) to dehydroquinate (DHQ). The polypeptide is 3-dehydroquinate synthase (Methylococcus capsulatus (strain ATCC 33009 / NCIMB 11132 / Bath)).